A 176-amino-acid polypeptide reads, in one-letter code: NAD(P)H-quinone oxidoreductase subunit 6, chloroplastic (176 aa).

5 consecutive transmembrane segments (helical) span residues isoleucine 10–threonine 30, proline 32–proline 52, alanine 61–methionine 81, isoleucine 107–threonine 127, and phenylalanine 152–alanine 172.

The protein belongs to the complex I subunit 6 family. NDH is composed of at least 16 different subunits, 5 of which are encoded in the nucleus.

The protein resides in the plastid. The protein localises to the chloroplast thylakoid membrane. It catalyses the reaction a plastoquinone + NADH + (n+1) H(+)(in) = a plastoquinol + NAD(+) + n H(+)(out). It carries out the reaction a plastoquinone + NADPH + (n+1) H(+)(in) = a plastoquinol + NADP(+) + n H(+)(out). In terms of biological role, NDH shuttles electrons from NAD(P)H:plastoquinone, via FMN and iron-sulfur (Fe-S) centers, to quinones in the photosynthetic chain and possibly in a chloroplast respiratory chain. The immediate electron acceptor for the enzyme in this species is believed to be plastoquinone. Couples the redox reaction to proton translocation, and thus conserves the redox energy in a proton gradient. The polypeptide is NAD(P)H-quinone oxidoreductase subunit 6, chloroplastic (ndhG) (Calycanthus floridus var. glaucus (Eastern sweetshrub)).